Consider the following 158-residue polypeptide: Transcription factor BTF3 homolog 4 (158 aa).

K5 is subject to N6-methyllysine. An NAC-A/B domain is found at T33–L98. The residue at position 111 (T111) is a Phosphothreonine. A disordered region spans residues Q123–N158. Residues D134 to D150 are compositionally biased toward acidic residues.

It belongs to the NAC-beta family.

The chain is Transcription factor BTF3 homolog 4 (BTF3L4) from Bos taurus (Bovine).